Reading from the N-terminus, the 439-residue chain is Enolase (439 aa).

The substrate site is built by H157 and E166. Catalysis depends on E209, which acts as the Proton donor. Residues D244, E297, and D324 each contribute to the Mg(2+) site. 2 residues coordinate substrate: E297 and D324. The active-site Proton acceptor is K349. Substrate-binding positions include 376-379 (SHRS) and K400.

This sequence belongs to the enolase family. In terms of assembly, homodimer. Mg(2+) serves as cofactor.

The protein localises to the cytoplasm. The catalysed reaction is (2R)-2-phosphoglycerate = phosphoenolpyruvate + H2O. It functions in the pathway carbohydrate degradation; glycolysis; pyruvate from D-glyceraldehyde 3-phosphate: step 4/5. The polypeptide is Enolase (ENOL) (Mastigamoeba balamuthi (Phreatamoeba balamuthi)).